The following is a 2158-amino-acid chain: Non-reducing polyketide synthase Preu8 (2158 aa).

Positions 4–241 are N-terminal acylcarrier protein transacylase domain (SAT); the sequence is LVLGDQVADH…TPIPVFAPYH (238 aa). A Ketosynthase family 3 (KS3) domain is found at 369–801; sequence NDKIAIVGMS…GGNTAIILED (433 aa). Catalysis depends on for beta-ketoacyl synthase activity residues Cys541, His676, and His719. Positions 900 to 1215 are malonyl-CoA:ACP transacylase (MAT) domain; it reads FTFTGQGSQY…ANSVSTLFLA (316 aa). The active-site For acyl/malonyl transferase activity is Ser989. The interval 1285–1603 is product template (PT) domain; it reads SCQRIVREEL…RRVLNIMMPP (319 aa). Positions 1287-1423 are N-terminal hotdog fold; sequence QRIVREELHA…GTVKYEDVSQ (137 aa). One can recognise a PKS/mFAS DH domain in the interval 1287 to 1598; the sequence is QRIVREELHA…FQNIARRVLN (312 aa). His1319 acts as the Proton acceptor; for dehydratase activity in catalysis. A C-terminal hotdog fold region spans residues 1451-1598; that stretch reads AHKVLRGMAY…FQNIARRVLN (148 aa). Catalysis depends on Asp1511, which acts as the Proton donor; for dehydratase activity. Positions 1619–1639 are enriched in low complexity; that stretch reads KKAASPTLAPAKAAKPAAKTS. The disordered stretch occupies residues 1619–1654; it reads KKAASPTLAPAKAAKPAAKTSKPSKARAKPAADSTT. Residues 1651 to 1725 form the Carrier 1 domain; that stretch reads DSTTSRVMKI…QMKKFFSQYD (75 aa). O-(pantetheine 4'-phosphoryl)serine is present on Ser1685. The disordered stretch occupies residues 1723 to 1779; it reads QYDGAPIPDDGDDSDGTDEPSNFSTPSYGADNASTPPSSAPSVNGKSSPENHEVLES. Over residues 1731 to 1740 the composition is skewed to acidic residues; it reads DDGDDSDGTD. Polar residues predominate over residues 1743–1770; sequence SNFSTPSYGADNASTPPSSAPSVNGKSS. One can recognise a Carrier 2 domain in the interval 1779–1853; the sequence is STEVSLARKI…DIENELGMRP (75 aa). Position 1813 is an O-(pantetheine 4'-phosphoryl)serine (Ser1813). Residues 1847–1879 form a disordered region; sequence NELGMRPKPKPKAEAAPPKSSAKASPSANKQPQ. The segment covering 1860–1876 has biased composition (low complexity); sequence EAAPPKSSAKASPSANK. A thioesterase (TE) domain region spans residues 1894-2144; sequence SQYPPANSVL…NHFTMMKGDH (251 aa).

Requires pantetheine 4'-phosphate as cofactor.

Functionally, non-reducing polyketide synthase; part of a gene cluster that mediates the biosynthesis of a yet unidentified natural product. The chain is Non-reducing polyketide synthase Preu8 from Preussia isomera (Coprophilous fungus).